The following is a 475-amino-acid chain: Sulfate adenylyltransferase subunit 1 (475 aa).

In terms of domain architecture, tr-type G spans 25-239; it reads KSLLRFLTCG…EVLETVEIQR (215 aa). The tract at residues 34-41 is G1; sequence GSVDDGKS. Position 34-41 (34-41) interacts with GTP; that stretch reads GSVDDGKS. The segment at 92–96 is G2; that stretch reads GITID. The tract at residues 113-116 is G3; it reads DTPG. Residues 113 to 117 and 168 to 171 contribute to the GTP site; these read DTPGH and NKMD. A G4 region spans residues 168–171; that stretch reads NKMD. The segment at 206 to 208 is G5; it reads SAL.

Belongs to the TRAFAC class translation factor GTPase superfamily. Classic translation factor GTPase family. CysN/NodQ subfamily. As to quaternary structure, heterodimer composed of CysD, the smaller subunit, and CysN.

It catalyses the reaction sulfate + ATP + H(+) = adenosine 5'-phosphosulfate + diphosphate. Its pathway is sulfur metabolism; hydrogen sulfide biosynthesis; sulfite from sulfate: step 1/3. In terms of biological role, with CysD forms the ATP sulfurylase (ATPS) that catalyzes the adenylation of sulfate producing adenosine 5'-phosphosulfate (APS) and diphosphate, the first enzymatic step in sulfur assimilation pathway. APS synthesis involves the formation of a high-energy phosphoric-sulfuric acid anhydride bond driven by GTP hydrolysis by CysN coupled to ATP hydrolysis by CysD. This Shigella dysenteriae serotype 1 (strain Sd197) protein is Sulfate adenylyltransferase subunit 1.